The primary structure comprises 194 residues: Probable molybdenum cofactor guanylyltransferase (194 aa).

Residues 8 to 10, Lys-20, and Asp-99 each bind GTP; that span reads LAG. Asp-99 contributes to the Mg(2+) binding site.

The protein belongs to the MobA family. It depends on Mg(2+) as a cofactor.

Its subcellular location is the cytoplasm. The enzyme catalyses Mo-molybdopterin + GTP + H(+) = Mo-molybdopterin guanine dinucleotide + diphosphate. Functionally, transfers a GMP moiety from GTP to Mo-molybdopterin (Mo-MPT) cofactor (Moco or molybdenum cofactor) to form Mo-molybdopterin guanine dinucleotide (Mo-MGD) cofactor. In Synechococcus elongatus (strain ATCC 33912 / PCC 7942 / FACHB-805) (Anacystis nidulans R2), this protein is Probable molybdenum cofactor guanylyltransferase.